Here is an 812-residue protein sequence, read N- to C-terminus: Probable inorganic carbon transporter subunit DabA (812 aa).

The Zn(2+) site is built by Cys-337, Asp-339, His-499, and Cys-514.

This sequence belongs to the inorganic carbon transporter (TC 9.A.2) DabA family. As to quaternary structure, forms a complex with DabB. Zn(2+) serves as cofactor.

Its subcellular location is the cell inner membrane. Part of an energy-coupled inorganic carbon pump. The protein is Probable inorganic carbon transporter subunit DabA of Xanthomonas euvesicatoria pv. vesicatoria (strain 85-10) (Xanthomonas campestris pv. vesicatoria).